The chain runs to 587 residues: L-ornithine N(5)-monooxygenase (587 aa).

FAD is bound by residues Glu-53–His-61 and Gln-72. Lys-77 is a substrate binding site. Position 235–238 (Gly-235–Ser-238) interacts with NADP(+). Residues Asn-282–Phe-285 and Asn-312 each bind substrate. Asn-312–Ser-314 is an NADP(+) binding site. The disordered stretch occupies residues Asp-488–Lys-511. Residues Ala-491–Pro-505 are compositionally biased toward polar residues. Thr-567–Leu-569 contacts FAD. Substrate is bound at residue Ser-570.

Belongs to the lysine N(6)-hydroxylase/L-ornithine N(5)-oxygenase family. As to quaternary structure, homotetramer. The cofactor is FAD.

The enzyme catalyses L-ornithine + NADPH + O2 = N(5)-hydroxy-L-ornithine + NADP(+) + H2O. It carries out the reaction L-ornithine + NADH + O2 = N(5)-hydroxy-L-ornithine + NAD(+) + H2O. It functions in the pathway siderophore biosynthesis; ferrichrome biosynthesis. Functionally, L-ornithine N(5)-monooxygenase; part of the siderophore biosynthetic pathway. Omphalotus olearius produces ferrichrome A, but no other siderophore has been detected. Ferrichrome A consists of a hexapeptide ring made up of one glycine, two serine, and three N(5)-hydroxyornithine amino acid residues, the latter acylated by trans-(alpha-methyl)-glutaconic acid residues. The biosynthesis of ferrichrome A depends on the hydroxylation of ornithine to N(5)-hydroxyornithine, catalyzed by the monooxygenase omo1. The second step, the acylation of N(5)-hydroxy-L-ornithine is probably catalyzed by the N-acyltransferase ato1. Finally, assembly of ferrichrome A is catalyzed by the nonribosomal peptide synthase (NRPS) fso1. This Omphalotus olearius (Jack o'lantern) protein is L-ornithine N(5)-monooxygenase.